The following is a 176-amino-acid chain: NAD(P)H-quinone oxidoreductase subunit 6, chloroplastic (176 aa).

Helical transmembrane passes span 10 to 30, 32 to 52, 61 to 81, 95 to 115, and 152 to 172; these read FLLV…VLLT, PIYS…FYIL, AQLL…VMFM, VGSG…ITII, and FFLP…GAIA.

It belongs to the complex I subunit 6 family. NDH is composed of at least 16 different subunits, 5 of which are encoded in the nucleus.

It is found in the plastid. Its subcellular location is the chloroplast thylakoid membrane. The enzyme catalyses a plastoquinone + NADH + (n+1) H(+)(in) = a plastoquinol + NAD(+) + n H(+)(out). The catalysed reaction is a plastoquinone + NADPH + (n+1) H(+)(in) = a plastoquinol + NADP(+) + n H(+)(out). Functionally, NDH shuttles electrons from NAD(P)H:plastoquinone, via FMN and iron-sulfur (Fe-S) centers, to quinones in the photosynthetic chain and possibly in a chloroplast respiratory chain. The immediate electron acceptor for the enzyme in this species is believed to be plastoquinone. Couples the redox reaction to proton translocation, and thus conserves the redox energy in a proton gradient. The chain is NAD(P)H-quinone oxidoreductase subunit 6, chloroplastic (ndhG) from Manihot esculenta (Cassava).